A 223-amino-acid chain; its full sequence is Glutathione S-transferase U6 (223 aa).

Residues 5 to 84 (EEVKLLGIWA…YIDETWKHNP (80 aa)) enclose the GST N-terminal domain. Glutathione contacts are provided by residues 15–16 (SP), 41–42 (NK), 55–56 (KI), and 68–69 (ES). One can recognise a GST C-terminal domain in the interval 89 to 216 (DPFQRSKARV…EKHIEHMNNM (128 aa)). Position 150 is a phosphothreonine (T150).

It belongs to the GST superfamily. Tau family.

The protein localises to the cytoplasm. Its subcellular location is the cytosol. The enzyme catalyses RX + glutathione = an S-substituted glutathione + a halide anion + H(+). In terms of biological role, may be involved in the conjugation of reduced glutathione to a wide number of exogenous and endogenous hydrophobic electrophiles and have a detoxification role against certain herbicides. The polypeptide is Glutathione S-transferase U6 (GSTU6) (Arabidopsis thaliana (Mouse-ear cress)).